The primary structure comprises 677 residues: DNA ligase (677 aa).

Residues 35–39 (DAEYD), 84–85 (SL), and Glu116 contribute to the NAD(+) site. Lys118 acts as the N6-AMP-lysine intermediate in catalysis. Residues Arg139, Glu176, Lys295, and Lys319 each coordinate NAD(+). Residues Cys413, Cys416, Cys431, and Cys437 each coordinate Zn(2+). The BRCT domain occupies 596 to 677 (LDELPLAGQV…MLAMFADLEG (82 aa)).

The protein belongs to the NAD-dependent DNA ligase family. LigA subfamily. Mg(2+) is required as a cofactor. Mn(2+) serves as cofactor.

It carries out the reaction NAD(+) + (deoxyribonucleotide)n-3'-hydroxyl + 5'-phospho-(deoxyribonucleotide)m = (deoxyribonucleotide)n+m + AMP + beta-nicotinamide D-nucleotide.. DNA ligase that catalyzes the formation of phosphodiester linkages between 5'-phosphoryl and 3'-hydroxyl groups in double-stranded DNA using NAD as a coenzyme and as the energy source for the reaction. It is essential for DNA replication and repair of damaged DNA. The polypeptide is DNA ligase (Pseudoalteromonas atlantica (strain T6c / ATCC BAA-1087)).